A 333-amino-acid polypeptide reads, in one-letter code: Probable G-protein coupled receptor 33 (333 aa).

Topologically, residues 1 to 30 (MDLINSTDYLINASTLVRNSTQFLAPASKM) are extracellular. N-linked (GlcNAc...) asparagine glycans are attached at residues N5, N12, and N19. The helical transmembrane segment at 31-53 (IIALSLYISSIIGTITNGLYLWV) threads the bilayer. Residues 54–64 (LRFKMKQTVNT) lie on the Cytoplasmic side of the membrane. The helical transmembrane segment at 65–86 (LLFFHLILSYFISTMILPFMAT) threads the bilayer. The Extracellular segment spans residues 87–103 (SQLQDNHWNFGTALCKV). C101 and C179 are oxidised to a cystine. A helical transmembrane segment spans residues 104–124 (FNGTLSLGMFTSVFFLSAIGL). The Cytoplasmic portion of the chain corresponds to 125-143 (DRYLLTLHPVWSQQHRTPR). The helical transmembrane segment at 144-165 (WASSIVLGVWISAAALSIPYLI) threads the bilayer. Residues 166–209 (FRQTHHDRKGKVTCQNNYAVSTNWESKEMQALRQWIHVACFISR) are Extracellular-facing. Residues 210–230 (FLLGFLLPFFIIIFCYERVAS) traverse the membrane as a helical segment. Residues 231 to 246 (KVKERSLFKSSKPFKV) are Cytoplasmic-facing. A helical transmembrane segment spans residues 247–268 (MMTAIISFFVCWMPYHIHQGLL). Residues 269-283 (LTTNQSLLLELTLIL) are Extracellular-facing. An N-linked (GlcNAc...) asparagine glycan is attached at N272. The helical transmembrane segment at 284-303 (TVLTTSFNTIFSPTLYLFVG) threads the bilayer. Over 304–333 (ENFKKVFKKSILALFESTFSEDSSVERTQT) the chain is Cytoplasmic.

This sequence belongs to the G-protein coupled receptor 1 family.

The protein localises to the cell membrane. In terms of biological role, orphan receptor; could be a chemoattractant receptor. The protein is Probable G-protein coupled receptor 33 (GPR33) of Pan troglodytes (Chimpanzee).